A 274-amino-acid chain; its full sequence is 2,3,4,5-tetrahydropyridine-2,6-dicarboxylate N-succinyltransferase (274 aa).

Residues Arg-104 and Asp-141 each coordinate substrate.

Belongs to the transferase hexapeptide repeat family. As to quaternary structure, homotrimer.

The protein localises to the cytoplasm. It catalyses the reaction (S)-2,3,4,5-tetrahydrodipicolinate + succinyl-CoA + H2O = (S)-2-succinylamino-6-oxoheptanedioate + CoA. It functions in the pathway amino-acid biosynthesis; L-lysine biosynthesis via DAP pathway; LL-2,6-diaminopimelate from (S)-tetrahydrodipicolinate (succinylase route): step 1/3. The protein is 2,3,4,5-tetrahydropyridine-2,6-dicarboxylate N-succinyltransferase of Serratia proteamaculans (strain 568).